A 233-amino-acid polypeptide reads, in one-letter code: Putative quercetin 2,3-dioxygenase PM1685 (233 aa).

H59, H61, H103, and E105 together coordinate a divalent metal cation.

This sequence belongs to the pirin family. A divalent metal cation serves as cofactor.

The catalysed reaction is quercetin + O2 = 2-(3,4-dihydroxybenzoyloxy)-4,6-dihydroxybenzoate + CO. Its pathway is flavonoid metabolism; quercetin degradation. Its function is as follows. Putative quercetin 2,3-dioxygenase. The chain is Putative quercetin 2,3-dioxygenase PM1685 from Pasteurella multocida (strain Pm70).